The primary structure comprises 474 residues: Cryptochrome DASH (474 aa).

Residues 2-136 (DTAVVWFRDD…ALRQRWTHTL (135 aa)) form the Photolyase/cryptochrome alpha/beta domain. Over residues 161–171 (EAAATVRDPRS) the composition is skewed to basic and acidic residues. A disordered region spans residues 161-202 (EAAATVRDPRSAPETVPTPDGLTPGPVPTVESLGVSEPPTDD).

This sequence belongs to the DNA photolyase class-1 family. The cofactor is FAD. (6R)-5,10-methylene-5,6,7,8-tetrahydrofolate serves as cofactor.

May have a photoreceptor function. Binds DNA; probably functions as a transcriptional repressor. In Natronomonas pharaonis (strain ATCC 35678 / DSM 2160 / CIP 103997 / JCM 8858 / NBRC 14720 / NCIMB 2260 / Gabara) (Halobacterium pharaonis), this protein is Cryptochrome DASH (cry).